Consider the following 220-residue polypeptide: Aklanonic acid methyltransferase DauC (220 aa).

The protein belongs to the methyltransferase superfamily. DnrC family. As to quaternary structure, homodimer.

It carries out the reaction aklanonate + S-adenosyl-L-methionine = methyl aklanonate + S-adenosyl-L-homocysteine. The protein operates within antibiotic biosynthesis; daunorubicin biosynthesis. Its pathway is antibiotic biosynthesis; carminomycin biosynthesis. It functions in the pathway antibiotic biosynthesis; rhodomycin biosynthesis. It participates in antibiotic biosynthesis; aclacinomycin biosynthesis. Its function is as follows. Involved in the biosynthesis of aklavinone which is an important precursor common to the formation of the clinically significant anthracyclines such as carminomycin, daunorubicin (daunomycin), rhodomycin, aclacinomycin T (aklavin) and aclacinomycin A (aclarubicin). These compounds are aromatic polyketide antibiotics that exhibit high cytotoxicity and are widely applied in the chemotherapy of a variety of cancers. Catalyzes the methyl esterification of aklanonic acid to yield aklanonic acid methyl ester. This is Aklanonic acid methyltransferase DauC (dauC) from Streptomyces sp. (strain C5).